Reading from the N-terminus, the 221-residue chain is Orotate phosphoribosyltransferase (221 aa).

Lys-27 lines the 5-phospho-alpha-D-ribose 1-diphosphate pocket. Position 35–36 (35–36) interacts with orotate; sequence FF. Residues 75 to 76, Arg-102, Lys-103, Lys-106, His-108, and 128 to 136 each bind 5-phospho-alpha-D-ribose 1-diphosphate; these read YK and DDVLTAGTA. The orotate site is built by Thr-132 and Arg-160.

It belongs to the purine/pyrimidine phosphoribosyltransferase family. PyrE subfamily. As to quaternary structure, homodimer. It depends on Mg(2+) as a cofactor.

The enzyme catalyses orotidine 5'-phosphate + diphosphate = orotate + 5-phospho-alpha-D-ribose 1-diphosphate. It functions in the pathway pyrimidine metabolism; UMP biosynthesis via de novo pathway; UMP from orotate: step 1/2. Catalyzes the transfer of a ribosyl phosphate group from 5-phosphoribose 1-diphosphate to orotate, leading to the formation of orotidine monophosphate (OMP). This Dichelobacter nodosus (strain VCS1703A) protein is Orotate phosphoribosyltransferase.